The following is a 346-amino-acid chain: uncharacterized protein (346 aa).

This is an uncharacterized protein from Mycoplasma pneumoniae (strain ATCC 29342 / M129 / Subtype 1) (Mycoplasmoides pneumoniae).